The sequence spans 98 residues: uncharacterized protein (98 aa).

The chain crosses the membrane as a helical span at residues 10–30; that stretch reads LYGFFAVTGVLIASFIIGEIV.

The protein localises to the host membrane. This is an uncharacterized protein from Saccharolobus islandicus (Sulfolobus islandicus).